The following is a 230-amino-acid chain: tRNA (guanine-N(7)-)-methyltransferase (230 aa).

Residues Glu61, Glu86, Asp113, and Asp135 each coordinate S-adenosyl-L-methionine. Asp135 is a catalytic residue. Substrate is bound by residues Lys139, Asp171, and 209-212; that span reads TRYE.

Belongs to the class I-like SAM-binding methyltransferase superfamily. TrmB family.

It catalyses the reaction guanosine(46) in tRNA + S-adenosyl-L-methionine = N(7)-methylguanosine(46) in tRNA + S-adenosyl-L-homocysteine. Its pathway is tRNA modification; N(7)-methylguanine-tRNA biosynthesis. Functionally, catalyzes the formation of N(7)-methylguanine at position 46 (m7G46) in tRNA. The protein is tRNA (guanine-N(7)-)-methyltransferase of Rhizobium etli (strain ATCC 51251 / DSM 11541 / JCM 21823 / NBRC 15573 / CFN 42).